The following is a 118-amino-acid chain: NADH-quinone oxidoreductase subunit A (118 aa).

3 helical membrane-spanning segments follow: residues 6–26, 61–81, and 87–107; these read LIIG…LLTA, FMYG…LPWA, and LGLF…IGLW.

It belongs to the complex I subunit 3 family. As to quaternary structure, NDH-1 is composed of 14 different subunits. Subunits NuoA, H, J, K, L, M, N constitute the membrane sector of the complex.

The protein resides in the cell membrane. It carries out the reaction a quinone + NADH + 5 H(+)(in) = a quinol + NAD(+) + 4 H(+)(out). NDH-1 shuttles electrons from NADH, via FMN and iron-sulfur (Fe-S) centers, to quinones in the respiratory chain. The immediate electron acceptor for the enzyme in this species is believed to be a menaquinone. Couples the redox reaction to proton translocation (for every two electrons transferred, four hydrogen ions are translocated across the cytoplasmic membrane), and thus conserves the redox energy in a proton gradient. The protein is NADH-quinone oxidoreductase subunit A of Clostridium beijerinckii (strain ATCC 51743 / NCIMB 8052) (Clostridium acetobutylicum).